A 540-amino-acid chain; its full sequence is MAPGSTMWLLGYIFLCFPVSFALIKQPKPETPTDPGVLHCRPWNFKFTINFQNQETGSSPVLVTWDNQGRLHRLQNDTDCGTRVGEGPGPSVVLEANYSSCYVTESEPYYVMLVGVEEVDAAGQNLVTKQQLLKCPMHLPAPDAGLCDSVPVQDRLPCATAPISQEDCEELGCCHSSEEVNACYYGNTVTSHCTQEGHFSIAVSRNVSSPPLHLDSVHLVFGNDSECQPVVATRAFVLFLFPFTACGTTRQITGDRAIYENELLATREVRTWSRGSITRDSIFRLRVSCSYSISSSALPVDMHVLTLPPPLPETQPGPLTVVLQIAKDKDYHSYYTMDDYPVVKLLRDPIYVDVSILYRTDPYLGLRLHQCWATPRTNPLYQPQWPILVKGCPYTGDNYQTQLIPVQEAFDLPFPSHHQRFSISTFSFLDSSVAKEALKGPIYLHCSVSVCQPTGTQSCTVTCPIDSRRRNSDINFQNSTANISSKGPMILLQATEDPSEKLHKHSGVPVHPGALWVAGLSGIFIIGALLVSYVAIRTRR.

The N-terminal stretch at 1–24 (MAPGSTMWLLGYIFLCFPVSFALI) is a signal peptide. At 25-515 (KQPKPETPTD…SGVPVHPGAL (491 aa)) the chain is on the extracellular side. N-linked (GlcNAc...) asparagine glycans are attached at residues Asn76 and Asn97. Residues 145 to 187 (GLCDSVPVQDRLPCATAPISQEDCEELGCCHSSEEVNACYYGN) form the P-type domain. One can recognise a ZP domain in the interval 192–470 (HCTQEGHFSI…VTCPIDSRRR (279 aa)). N-linked (GlcNAc...) asparagine glycosylation is found at Asn206 and Asn223. Residue Ser296 is glycosylated (O-linked (GalNAc...) serine). Thr306 is a glycosylation site (O-linked (GalNAc...) threonine). An intrachain disulfide couples Cys371 to Cys446. Positions 467 to 540 (SRRRNSDINF…VSYVAIRTRR (74 aa)) are cleaved as a propeptide — removed in mature form. Residues Asn478 and Asn482 are each glycosylated (N-linked (GlcNAc...) asparagine). The chain crosses the membrane as a helical span at residues 516 to 536 (WVAGLSGIFIIGALLVSYVAI). Residues 537–540 (RTRR) lie on the Cytoplasmic side of the membrane.

This sequence belongs to the ZP domain family. ZPB subfamily. In terms of processing, proteolytically cleaved before the transmembrane segment to yield the secreted ectodomain incorporated in the zona pellucida. As to expression, expressed in oocytes (at protein level).

The protein localises to the zona pellucida. It localises to the cell membrane. Its function is as follows. Component of the zona pellucida, an extracellular matrix surrounding oocytes which mediates sperm binding, induction of the acrosome reaction and prevents post-fertilization polyspermy. The zona pellucida is composed of 3 to 4 glycoproteins, ZP1, ZP2, ZP3, and ZP4. ZP4 may act as a sperm receptor. The protein is Zona pellucida sperm-binding protein 4 (ZP4) of Oryctolagus cuniculus (Rabbit).